The following is a 273-amino-acid chain: Large ribosomal subunit protein uL2 (273 aa).

Residues I228–K273 are disordered. Basic residues predominate over residues K254–K273.

Belongs to the universal ribosomal protein uL2 family. In terms of assembly, part of the 50S ribosomal subunit. Forms a bridge to the 30S subunit in the 70S ribosome.

Its function is as follows. One of the primary rRNA binding proteins. Required for association of the 30S and 50S subunits to form the 70S ribosome, for tRNA binding and peptide bond formation. It has been suggested to have peptidyltransferase activity; this is somewhat controversial. Makes several contacts with the 16S rRNA in the 70S ribosome. The sequence is that of Large ribosomal subunit protein uL2 from Rickettsia typhi (strain ATCC VR-144 / Wilmington).